The following is a 207-amino-acid chain: Galactoside O-acetyltransferase (207 aa).

N87 is an acetyl-CoA binding site. H117 acts as the Proton donor/acceptor in catalysis. Acetyl-CoA is bound by residues A144, A162, 167 to 168 (TK), and R185.

This sequence belongs to the transferase hexapeptide repeat family. Homotrimer.

The protein localises to the cytoplasm. The enzyme catalyses a beta-D-galactoside + acetyl-CoA = a 6-acetyl-beta-D-galactoside + CoA. The polypeptide is Galactoside O-acetyltransferase (lacA) (Lactococcus lactis subsp. lactis (strain IL1403) (Streptococcus lactis)).